The sequence spans 69 residues: Small cysteine-rich protein (69 aa).

Positions 1–19 (MKLQLCLVLLLLGVLYVQS) are cleaved as a signal peptide. A propeptide spanning residues 20–22 (VPE) is cleaved from the precursor.

The protein belongs to the Cnidaria small cysteine-rich protein (SCRiP) family. delta subfamily. Contains 4 disulfide bonds.

It is found in the secreted. Its subcellular location is the nematocyst. In terms of biological role, induces neurotoxic symptoms on zebrafish. Has also been claimed to be implied in calcification, but this function seems improbable. In Metridium senile (Brown sea anemone), this protein is Small cysteine-rich protein.